The sequence spans 656 residues: Spermatogenesis-associated protein 13 (656 aa).

Residues 1-12 (MHPASVTTTSQD) are compositionally biased toward polar residues. The disordered stretch occupies residues 1–26 (MHPASVTTTSQDPCAPSGSCRGGRRR). Ser-82 bears the Phosphoserine mark. A disordered region spans residues 85–115 (IGLDRVGRRRQMKTSNVSSDGGAESSALVDD). Residues 102–154 (SSDGGAESSALVDDNGSEEDFSYEELCQANPRYLQPGGEQLAINELISDGSVV) are ABR (APC-binding region) domain. At Ser-118 the chain carries Phosphoserine. In terms of domain architecture, SH3 spans 151–210 (GSVVCAEALWDHVTMDDQELGFKAGDVIQVLEASNKDWWWGRNEDKEAWFPASFVRLRVN). The disordered stretch occupies residues 215–242 (PENCSSSHGEEQDEDTSKARHKHPESQQ). Positions 244–428 (MRTNVIQEIM…KNVACLINER (185 aa)) constitute a DH domain. The 107-residue stretch at 459–565 (ELIHSGELTK…WLQAYADERR (107 aa)) folds into the PH domain. Positions 565–656 (RRVQEDQQMG…TFHKLTPFRK (92 aa)) are C-terminal tail.

In terms of assembly, interacts (via ABR and SH3 domain) with APC. The binding of APC enhances its GEF activity by relieving it from an autoinhibitory conformation, in which the ABR and SH3 domains are associated with the C-terminal tail. Interacts (via C-terminal tail) with PPP1R9B (via C-terminus). Interacts with RAC1. As to expression, expression is aberrantly enhanced in most colorectal tumors.

The protein localises to the cytoplasm. It is found in the cell projection. It localises to the filopodium. The protein resides in the lamellipodium. Its subcellular location is the ruffle membrane. The protein localises to the podosome. Its activity is regulated as follows. Both the ABR and the SH3 domains contribute to maintaining the protein in an inhibited conformation by associating with the C-terminal tail. Binding of these domains to the C-terminal tail inhibits the activity of the protein by blocking a region that is required for its GEF activity. Acts as a guanine nucleotide exchange factor (GEF) for RHOA, RAC1 and CDC42 GTPases. Regulates cell migration and adhesion assembly and disassembly through a RAC1, PI3K, RHOA and AKT1-dependent mechanism. Increases both RAC1 and CDC42 activity, but decreases the amount of active RHOA. Required for MMP9 up-regulation via the JNK signaling pathway in colorectal tumor cells. Involved in tumor angiogenesis and may play a role in intestinal adenoma formation and tumor progression. The sequence is that of Spermatogenesis-associated protein 13 (Spata13) from Mus musculus (Mouse).